A 993-amino-acid chain; its full sequence is Ephrin type-A receptor 7 (993 aa).

The signal sequence occupies residues 1-27; sequence MVLRSRLPPWIMLCSVWLLRFAHTGEA. Topologically, residues 28-550 are extracellular; sequence QAAKEVILLD…TAVSSEQNPV (523 aa). Residues 32 to 210 enclose the Eph LBD domain; the sequence is EVILLDSKAQ…YYKKCWSIIE (179 aa). 2 consecutive Fibronectin type-III domains span residues 331–441 and 442–537; these read PPSA…TGQA and APSQ…TLEE. N-linked (GlcNAc...) asparagine glycosylation is found at N343 and N410. Residues 551 to 571 form a helical membrane-spanning segment; that stretch reads IIIAVVAVAGTIILVFMVFGF. Residues 572–993 lie on the Cytoplasmic side of the membrane; that stretch reads IIGRRHCGYS…LHLHGTGIQV (422 aa). Phosphotyrosine; by autocatalysis occurs at positions 603 and 609. A Protein kinase domain is found at 628 to 889; the sequence is IKIERVIGAG…QIVGILDKMI (262 aa). Residues 634 to 642 and K660 contribute to the ATP site; that span reads IGAGEFGEV. Residue D753 is the Proton acceptor of the active site. A phosphotyrosine; by autocatalysis mark is found at Y786 and Y935. In terms of domain architecture, SAM spans 918–982; sequence TTFCSVGEWL…MSSIQTMRAQ (65 aa). The PDZ-binding signature appears at 991–993; sequence IQV.

This sequence belongs to the protein kinase superfamily. Tyr protein kinase family. Ephrin receptor subfamily. As to quaternary structure, heterotetramer upon binding of the ligand. The heterotetramer is composed of an ephrin dimer and a receptor dimer. Oligomerization is probably required to induce biological responses. Post-translationally, phosphorylated.

The protein localises to the cell membrane. The enzyme catalyses L-tyrosyl-[protein] + ATP = O-phospho-L-tyrosyl-[protein] + ADP + H(+). Receptor tyrosine kinase which binds promiscuously GPI-anchored ephrin-A family ligands residing on adjacent cells, leading to contact-dependent bidirectional signaling into neighboring cells. The signaling pathway downstream of the receptor is referred to as forward signaling while the signaling pathway downstream of the ephrin ligand is referred to as reverse signaling. Among GPI-anchored ephrin-A ligands, EFNA5 is a cognate/functional ligand for EPHA7 and their interaction regulates brain development modulating cell-cell adhesion and repulsion. Has a repellent activity on axons and is for instance involved in the guidance of corticothalamic axons and in the proper topographic mapping of retinal axons to the colliculus. May also regulate brain development through a caspase(CASP3)-dependent proapoptotic activity. Forward signaling may result in activation of components of the ERK signaling pathway including MAP2K1, MAP2K2, MAPK1 and MAPK3 which are phosphorylated upon activation of EPHA7. This chain is Ephrin type-A receptor 7 (EPHA7), found in Gallus gallus (Chicken).